Here is a 423-residue protein sequence, read N- to C-terminus: Mannose-6-phosphate isomerase (423 aa).

Residue Ala-2 is modified to N-acetylalanine. Phosphoserine occurs at positions 102 and 108. 4 residues coordinate Zn(2+): Gln-110, His-112, Glu-137, and His-276. Arg-295 is a catalytic residue.

This sequence belongs to the mannose-6-phosphate isomerase type 1 family. Requires Zn(2+) as cofactor.

The protein resides in the cytoplasm. The catalysed reaction is D-mannose 6-phosphate = D-fructose 6-phosphate. It functions in the pathway nucleotide-sugar biosynthesis; GDP-alpha-D-mannose biosynthesis; alpha-D-mannose 1-phosphate from D-fructose 6-phosphate: step 1/2. Functionally, isomerase that catalyzes the interconversion of fructose-6-P and mannose-6-P and has a critical role in the supply of D-mannose derivatives required for many eukaryotic glycosylation reactions. The sequence is that of Mannose-6-phosphate isomerase from Rattus norvegicus (Rat).